The chain runs to 197 residues: MQERKAAVNRDTLETQISVALNLDGTGAAAFATGVPFLEHMMDQIARHGMIDLDVRCQGDTHIDDHHSVEDIGITIGQAMHQAVGDKRGIRRYGHAYVPLDEALSRVVIDFSGRPGLEMHIPFTQKRIGSFDTELFWEFFQGFVNHAGVTLHIDCLRGHNAHHQIETVFKAFGRALRMALEVDPRMGNAMPSTKGTL.

It belongs to the imidazoleglycerol-phosphate dehydratase family.

The protein localises to the cytoplasm. It carries out the reaction D-erythro-1-(imidazol-4-yl)glycerol 3-phosphate = 3-(imidazol-4-yl)-2-oxopropyl phosphate + H2O. Its pathway is amino-acid biosynthesis; L-histidine biosynthesis; L-histidine from 5-phospho-alpha-D-ribose 1-diphosphate: step 6/9. This is Imidazoleglycerol-phosphate dehydratase from Teredinibacter turnerae (strain ATCC 39867 / T7901).